The sequence spans 106 residues: Small ribosomal subunit protein uS10 (106 aa).

The protein belongs to the universal ribosomal protein uS10 family. As to quaternary structure, part of the 30S ribosomal subunit.

Functionally, involved in the binding of tRNA to the ribosomes. This chain is Small ribosomal subunit protein uS10, found in Synechococcus sp. (strain WH7803).